The primary structure comprises 96 residues: Small ribosomal subunit protein bS20 (96 aa).

The interval 1–27 is disordered; the sequence is MAKQEVAAKKVKRPTALKRDLQNKKKR.

Belongs to the bacterial ribosomal protein bS20 family.

Its function is as follows. Binds directly to 16S ribosomal RNA. The sequence is that of Small ribosomal subunit protein bS20 from Protochlamydia amoebophila (strain UWE25).